Consider the following 483-residue polypeptide: Glutamate--tRNA ligase 1 (483 aa).

The short motif at 9-19 (PSPTGFLHIGG) is the 'HIGH' region element. The 'KMSKS' region motif lies at 238 to 242 (KLSKR). Position 241 (lysine 241) interacts with ATP.

It belongs to the class-I aminoacyl-tRNA synthetase family. Glutamate--tRNA ligase type 1 subfamily. As to quaternary structure, monomer.

It localises to the cytoplasm. It catalyses the reaction tRNA(Glu) + L-glutamate + ATP = L-glutamyl-tRNA(Glu) + AMP + diphosphate. Catalyzes the attachment of glutamate to tRNA(Glu) in a two-step reaction: glutamate is first activated by ATP to form Glu-AMP and then transferred to the acceptor end of tRNA(Glu). The polypeptide is Glutamate--tRNA ligase 1 (Bartonella henselae (strain ATCC 49882 / DSM 28221 / CCUG 30454 / Houston 1) (Rochalimaea henselae)).